The sequence spans 990 residues: Envelope glycoprotein gp160 (990 aa).

Residues 1–107 (MASSKNMPSR…CLIWEMGKKH (107 aa)) form the signal peptide. Topologically, residues 108 to 838 (SCNAEEVIAL…WSGWFSWLKY (731 aa)) are extracellular. Residues asparagine 141, asparagine 162, asparagine 207, asparagine 259, asparagine 299, asparagine 363, asparagine 386, asparagine 402, asparagine 413, asparagine 434, asparagine 438, asparagine 469, asparagine 474, asparagine 480, asparagine 490, asparagine 500, asparagine 514, asparagine 526, asparagine 536, asparagine 542, asparagine 550, asparagine 560, and asparagine 567 are each glycosylated (N-linked (GlcNAc...) asparagine; by host). The tract at residues 663–683 (GIGLVIVLAIMAIIAAAGAGL) is fusion peptide. Residues 695-745 (RTAVQSLANATAAQQNVLEATYAMVQHVAKGVRILEARVARVEAIVDRMML) are a coiled coil. Asparagine 703 carries N-linked (GlcNAc...) asparagine; by host glycosylation. The tract at residues 729 to 745 (LEARVARVEAIVDRMML) is immunosuppression. Asparagine 771, asparagine 778, and asparagine 794 each carry an N-linked (GlcNAc...) asparagine; by host glycan. Residues 786–821 (EEIEQHEANLSLLLKEAALQVQIAQRDAQRIPDVWK) are a coiled coil. Residues 839-859 (IPWIVVCIVGVICFRLLMCVI) traverse the membrane as a helical segment. Over 860 to 990 (TMCLQAYRQV…AIENEYVELS (131 aa)) the chain is Cytoplasmic. The S-palmitoyl cysteine; by host moiety is linked to residue cysteine 862. Residues 890 to 909 (KQREERDGSSGSENLEHEKR) form a disordered region.

The mature envelope protein (Env) consists of a trimer of SU-TM heterodimers attached by noncovalent interactions or by a labile interchain disulfide bond. Specific enzymatic cleavages in vivo yield mature proteins. Envelope glycoproteins are synthesized as an inactive precursor that is N-glycosylated and processed likely by host cell furin or by a furin-like protease in the Golgi to yield the mature SU and TM proteins. The cleavage site between SU and TM requires the minimal sequence [KR]-X-[KR]-R. Post-translationally, the transmembrane protein is palmitoylated.

The protein localises to the virion membrane. It is found in the host cell membrane. In terms of biological role, the surface protein (SU) attaches the virus to the host cell by binding to its receptor. This interaction triggers the refolding of the transmembrane protein (TM) and is thought to activate its fusogenic potential by unmasking its fusion peptide. Fusion occurs at the host cell plasma membrane. The transmembrane protein (TM) acts as a class I viral fusion protein. Under the current model, the protein has at least 3 conformational states: pre-fusion native state, pre-hairpin intermediate state, and post-fusion hairpin state. During viral and target cell membrane fusion, the coiled coil regions (heptad repeats) assume a trimer-of-hairpins structure, positioning the fusion peptide in close proximity to the C-terminal region of the ectodomain. The formation of this structure appears to drive apposition and subsequent fusion of viral and target cell membranes. Membranes fusion leads to delivery of the nucleocapsid into the cytoplasm. The polypeptide is Envelope glycoprotein gp160 (env) (Ovine maedi visna related virus (strain South Africa) (SA-OMVV)).